Here is a 211-residue protein sequence, read N- to C-terminus: Large ribosomal subunit protein eL13 (211 aa).

It belongs to the eukaryotic ribosomal protein eL13 family. In terms of assembly, component of the 60S large ribosomal subunit (LSU).

The protein localises to the cytoplasm. Functionally, component of the ribosome, a large ribonucleoprotein complex responsible for the synthesis of proteins in the cell. The small ribosomal subunit (SSU) binds messenger RNAs (mRNAs) and translates the encoded message by selecting cognate aminoacyl-transfer RNA (tRNA) molecules. The large subunit (LSU) contains the ribosomal catalytic site termed the peptidyl transferase center (PTC), which catalyzes the formation of peptide bonds, thereby polymerizing the amino acids delivered by tRNAs into a polypeptide chain. The nascent polypeptides leave the ribosome through a tunnel in the LSU and interact with protein factors that function in enzymatic processing, targeting, and the membrane insertion of nascent chains at the exit of the ribosomal tunnel. As part of the LSU, it is probably required for its formation and the maturation of rRNAs. This chain is Large ribosomal subunit protein eL13 (rpl13), found in Ictalurus punctatus (Channel catfish).